The primary structure comprises 524 residues: Inosine-5'-monophosphate dehydrogenase (524 aa).

CBS domains are found at residues 121–180 (FILD…NTPV) and 184–242 (MTPR…PLAS). NAD(+)-binding positions include 280–282 (DSS) and 330–332 (GMG). The K(+) site is built by Gly332 and Gly334. Ser335 contributes to the IMP binding site. Cys337 is a K(+) binding site. The Thioimidate intermediate role is filled by Cys337. IMP-binding positions include 370–372 (DGG), 393–394 (GG), and 417–421 (YRGMG). Arg439 acts as the Proton acceptor in catalysis. Gln451 is an IMP binding site. Glu510 and Gly511 together coordinate K(+).

Belongs to the IMPDH/GMPR family. As to quaternary structure, homotetramer. Requires K(+) as cofactor.

The protein localises to the cytoplasm. It carries out the reaction IMP + NAD(+) + H2O = XMP + NADH + H(+). Its pathway is purine metabolism; XMP biosynthesis via de novo pathway; XMP from IMP: step 1/1. With respect to regulation, mycophenolic acid (MPA) is a non-competitive inhibitor that prevents formation of the closed enzyme conformation by binding to the same site as the amobile flap. In contrast, mizoribine monophosphate (MZP) is a competitive inhibitor that induces the closed conformation. MPA is a potent inhibitor of mammalian IMPDHs but a poor inhibitor of the bacterial enzymes. MZP is a more potent inhibitor of bacterial IMPDH. Functionally, catalyzes the conversion of inosine 5'-phosphate (IMP) to xanthosine 5'-phosphate (XMP), the first committed and rate-limiting step in the de novo synthesis of guanine nucleotides, and therefore plays an important role in the regulation of cell growth. The sequence is that of Inosine-5'-monophosphate dehydrogenase (gua1) from Schizosaccharomyces pombe (strain 972 / ATCC 24843) (Fission yeast).